The sequence spans 96 residues: Ferredoxin (96 aa).

The 2Fe-2S ferredoxin-type domain occupies 4–94 (YKVKLLTPEG…DVVIETHKEE (91 aa)). Residues C40, C45, C48, and C78 each contribute to the [2Fe-2S] cluster site.

This sequence belongs to the 2Fe2S plant-type ferredoxin family. Requires [2Fe-2S] cluster as cofactor.

It is found in the plastid. The protein localises to the chloroplast. Ferredoxins are iron-sulfur proteins that transfer electrons in a wide variety of metabolic reactions. In Panax ginseng (Korean ginseng), this protein is Ferredoxin.